The chain runs to 368 residues: Terpene cyclase penA (368 aa).

The next 6 membrane-spanning stretches (helical) occupy residues 10 to 30, 81 to 101, 118 to 138, 192 to 212, 233 to 253, and 334 to 354; these read IILASVAIYTKYYLSFQNGFI, LSLYAIAFAGSMIPMWLILLM, LTGLLVQGIGPGVMMCVLLAM, LFIASWQGWPLYIALAVGIAH, FALACSIISHVGLLLISFLSI, and LATMSLAFGPCSVALALYWTA.

The protein belongs to the membrane-bound ascI terpene cyclase family.

It is found in the membrane. The protein operates within secondary metabolite biosynthesis. Functionally, part of the gene cluster that mediates the biosynthesis of the indole diterpenes penitrems. The geranylgeranyl diphosphate (GGPP) synthase penG catalyzes the first step in penitrem biosynthesis via conversion of farnesyl pyrophosphate and isopentyl pyrophosphate into geranylgeranyl pyrophosphate (GGPP). Condensation of indole-3-glycerol phosphate with GGPP by the prenyl transferase penC then forms 3-geranylgeranylindole (3-GGI). Epoxidation by the FAD-dependent monooxygenase penM leads to a epoxidized-GGI that is substrate of the terpene cyclase penB for cyclization to yield paspaline. Paspaline is subsequently converted to 13-desoxypaxilline by the cytochrome P450 monooxygenase penP, the latter being then converted to paxilline by the cytochrome P450 monooxygenase penQ. Paxilline is converted to beta-paxitriol via C-10 ketoreduction by the short-chain dehydrogenase PC-15 which can be monoprenylated at the C-20 by the indole diterpene prenyltransferase penD. A two-step elimination (acetylation and elimination) process performed by the O-acetyltransferase PC-16 and the P.simplicissimum ptmI-ortholog not yet identified in P.crustosum, leads to the production of the prenylated form of penijanthine. The FAD-linked oxidoreductase ptmO then converts the prenylated form of penijanthine into PC-M5 which is in turn transformed into PC-M4 by the aromatic dimethylallyltransferase PC-22. A series of oxidation steps involving 4 cytochrome P450 monooxygenases (PC-21, PC-05, PC-23, PC-20) and a FAD-dependent monooxygenase (PC-14) are required for the transformation of PC-M4 to penitrems A and E. Synthesis of these final products is proposed to proceed via penitrems D and C (PC-21, PC-05, PC-14) and penitrems B and F (PC-21, PC-05, PC-14, PC-23). In Penicillium crustosum (Blue mold fungus), this protein is Terpene cyclase penA.